The primary structure comprises 169 residues: Protein-export protein SecB (169 aa).

It belongs to the SecB family. In terms of assembly, homotetramer, a dimer of dimers. One homotetramer interacts with 1 SecA dimer.

It is found in the cytoplasm. In terms of biological role, one of the proteins required for the normal export of preproteins out of the cell cytoplasm. It is a molecular chaperone that binds to a subset of precursor proteins, maintaining them in a translocation-competent state. It also specifically binds to its receptor SecA. This chain is Protein-export protein SecB, found in Haemophilus influenzae (strain 86-028NP).